We begin with the raw amino-acid sequence, 406 residues long: Argininosuccinate synthase (406 aa).

ATP is bound by residues 11–19 and Ala38; that span reads AYSGGLDTS. Positions 91 and 96 each coordinate L-citrulline. Gly121 contacts ATP. L-aspartate is bound by residues Thr123, Asn127, and Asp128. Asn127 contributes to the L-citrulline binding site. L-citrulline-binding residues include Arg131, Ser181, Ser190, Glu266, and Tyr278.

The protein belongs to the argininosuccinate synthase family. Type 1 subfamily. Homotetramer.

It is found in the cytoplasm. The enzyme catalyses L-citrulline + L-aspartate + ATP = 2-(N(omega)-L-arginino)succinate + AMP + diphosphate + H(+). The protein operates within amino-acid biosynthesis; L-arginine biosynthesis; L-arginine from L-ornithine and carbamoyl phosphate: step 2/3. The sequence is that of Argininosuccinate synthase from Campylobacter jejuni subsp. jejuni serotype O:2 (strain ATCC 700819 / NCTC 11168).